Here is a 745-residue protein sequence, read N- to C-terminus: uncharacterized protein (745 aa).

Residues 158-256 enclose the HTH araC/xylS-type domain; the sequence is NQVCDYIELH…HQTPKQYRGD (99 aa). DNA-binding regions (H-T-H motif) lie at residues 175-196 and 223-246; these read SELSEYVGWSESHLSKKFAESL and ITDIALQNGFSSAASFARTFKHIT.

This is an uncharacterized protein from Staphylococcus aureus.